A 221-amino-acid polypeptide reads, in one-letter code: Probable septum site-determining protein MinC (221 aa).

The protein belongs to the MinC family. Interacts with MinD and FtsZ.

Cell division inhibitor that blocks the formation of polar Z ring septums. Rapidly oscillates between the poles of the cell to destabilize FtsZ filaments that have formed before they mature into polar Z rings. Prevents FtsZ polymerization. This chain is Probable septum site-determining protein MinC, found in Shewanella baltica (strain OS223).